A 393-amino-acid chain; its full sequence is NAD(P)H-quinone oxidoreductase subunit H, chloroplastic (393 aa).

This sequence belongs to the complex I 49 kDa subunit family. As to quaternary structure, NDH is composed of at least 16 different subunits, 5 of which are encoded in the nucleus.

The protein resides in the plastid. It localises to the chloroplast thylakoid membrane. It carries out the reaction a plastoquinone + NADH + (n+1) H(+)(in) = a plastoquinol + NAD(+) + n H(+)(out). The catalysed reaction is a plastoquinone + NADPH + (n+1) H(+)(in) = a plastoquinol + NADP(+) + n H(+)(out). Functionally, NDH shuttles electrons from NAD(P)H:plastoquinone, via FMN and iron-sulfur (Fe-S) centers, to quinones in the photosynthetic chain and possibly in a chloroplast respiratory chain. The immediate electron acceptor for the enzyme in this species is believed to be plastoquinone. Couples the redox reaction to proton translocation, and thus conserves the redox energy in a proton gradient. The protein is NAD(P)H-quinone oxidoreductase subunit H, chloroplastic of Vitis vinifera (Grape).